The sequence spans 150 residues: UPF0506 protein SJCHGC02380 (150 aa).

An N-terminal signal peptide occupies residues 1–18 (MNTCIQLLILCLVTVINS). Asparagine 20, asparagine 24, asparagine 36, asparagine 48, asparagine 52, and asparagine 110 each carry an N-linked (GlcNAc...) asparagine glycan. 3 cysteine pairs are disulfide-bonded: cysteine 116-cysteine 130, cysteine 123-cysteine 134, and cysteine 129-cysteine 139.

It belongs to the UPF0506 family.

It localises to the secreted. This chain is UPF0506 protein SJCHGC02380, found in Schistosoma japonicum (Blood fluke).